A 155-amino-acid chain; its full sequence is Ribonuclease H (155 aa).

In terms of domain architecture, RNase H type-1 spans 1-142 (MLKQVEIFTD…CDVLARDAAS (142 aa)). Positions 10, 48, 70, and 134 each coordinate Mg(2+).

The protein belongs to the RNase H family. In terms of assembly, monomer. Requires Mg(2+) as cofactor.

Its subcellular location is the cytoplasm. The enzyme catalyses Endonucleolytic cleavage to 5'-phosphomonoester.. Functionally, endonuclease that specifically degrades the RNA of RNA-DNA hybrids. In Serratia proteamaculans (strain 568), this protein is Ribonuclease H.